The following is a 201-amino-acid chain: Probable chemoreceptor glutamine deamidase CheD 2 (201 aa).

Belongs to the CheD family.

The catalysed reaction is L-glutaminyl-[protein] + H2O = L-glutamyl-[protein] + NH4(+). In terms of biological role, probably deamidates glutamine residues to glutamate on methyl-accepting chemotaxis receptors (MCPs), playing an important role in chemotaxis. This is Probable chemoreceptor glutamine deamidase CheD 2 from Chromobacterium violaceum (strain ATCC 12472 / DSM 30191 / JCM 1249 / CCUG 213 / NBRC 12614 / NCIMB 9131 / NCTC 9757 / MK).